The chain runs to 91 residues: Large ribosomal subunit protein eL43 (91 aa).

A C4-type zinc finger spans residues 38 to 59; that stretch reads CNFCGKDSLKRKAAGIWECKAC.

It belongs to the eukaryotic ribosomal protein eL43 family.

The sequence is that of Large ribosomal subunit protein eL43 from Schistosoma mansoni (Blood fluke).